We begin with the raw amino-acid sequence, 95 residues long: Protein TusB (95 aa).

Belongs to the DsrH/TusB family. As to quaternary structure, heterohexamer, formed by a dimer of trimers. The hexameric TusBCD complex contains 2 copies each of TusB, TusC and TusD. The TusBCD complex interacts with TusE.

The protein resides in the cytoplasm. Functionally, part of a sulfur-relay system required for 2-thiolation of 5-methylaminomethyl-2-thiouridine (mnm(5)s(2)U) at tRNA wobble positions. This Escherichia coli O139:H28 (strain E24377A / ETEC) protein is Protein TusB.